A 172-amino-acid chain; its full sequence is Large ribosomal subunit protein uL10 (172 aa).

Belongs to the universal ribosomal protein uL10 family. In terms of assembly, part of the ribosomal stalk of the 50S ribosomal subunit. The N-terminus interacts with L11 and the large rRNA to form the base of the stalk. The C-terminus forms an elongated spine to which L12 dimers bind in a sequential fashion forming a multimeric L10(L12)X complex.

In terms of biological role, forms part of the ribosomal stalk, playing a central role in the interaction of the ribosome with GTP-bound translation factors. The polypeptide is Large ribosomal subunit protein uL10 (Brucella suis biovar 1 (strain 1330)).